The following is a 316-amino-acid chain: Nucleotide-binding protein Sala_2050 (316 aa).

18-25 (GLSGAGKS) provides a ligand contact to ATP. Residue 69–72 (DSRS) participates in GTP binding. Residues 283–316 (GYEPTLTHRNLDSAPQDGLEGKPPSAARASGGAR) are disordered.

Belongs to the RapZ-like family.

In terms of biological role, displays ATPase and GTPase activities. This is Nucleotide-binding protein Sala_2050 from Sphingopyxis alaskensis (strain DSM 13593 / LMG 18877 / RB2256) (Sphingomonas alaskensis).